A 59-amino-acid polypeptide reads, in one-letter code: UPF0434 protein Sputw3181_2540 (59 aa).

The protein belongs to the UPF0434 family.

The sequence is that of UPF0434 protein Sputw3181_2540 from Shewanella sp. (strain W3-18-1).